The chain runs to 209 residues: Uracil phosphoribosyltransferase (209 aa).

5-phospho-alpha-D-ribose 1-diphosphate-binding positions include Arg79, Arg104, and 131–139 (DPMLATGGS). Uracil-binding positions include Ile194 and 199–201 (GDA). Asp200 contributes to the 5-phospho-alpha-D-ribose 1-diphosphate binding site.

The protein belongs to the UPRTase family. The cofactor is Mg(2+).

It catalyses the reaction UMP + diphosphate = 5-phospho-alpha-D-ribose 1-diphosphate + uracil. It participates in pyrimidine metabolism; UMP biosynthesis via salvage pathway; UMP from uracil: step 1/1. With respect to regulation, allosterically activated by GTP. Functionally, catalyzes the conversion of uracil and 5-phospho-alpha-D-ribose 1-diphosphate (PRPP) to UMP and diphosphate. The polypeptide is Uracil phosphoribosyltransferase (Bacillus licheniformis (strain ATCC 14580 / DSM 13 / JCM 2505 / CCUG 7422 / NBRC 12200 / NCIMB 9375 / NCTC 10341 / NRRL NRS-1264 / Gibson 46)).